Here is a 1598-residue protein sequence, read N- to C-terminus: Pentafunctional AROM polypeptide (1598 aa).

Positions 1-384 are 3-dehydroquinate synthase; it reads MGVPTKISIL…YEPRACTVSN (384 aa). Residues 44–46, 81–84, 114–116, and Asp-119 contribute to the NAD(+) site; these read DTN, ESSK, and GGV. Arg-130 contributes to the 7-phospho-2-dehydro-3-deoxy-D-arabino-heptonate binding site. Residue 139 to 140 participates in NAD(+) binding; the sequence is TT. 7-phospho-2-dehydro-3-deoxy-D-arabino-heptonate-binding residues include Asp-146 and Lys-152. Lys-161 contributes to the NAD(+) binding site. 7-phospho-2-dehydro-3-deoxy-D-arabino-heptonate is bound at residue Asn-162. NAD(+)-binding positions include 179–182 and Asn-190; that span reads FLNT. Glu-194 provides a ligand contact to Zn(2+). Residues 194 to 197 and Lys-250 each bind 7-phospho-2-dehydro-3-deoxy-D-arabino-heptonate; that span reads EVIK. Glu-260 functions as the Proton acceptor; for 3-dehydroquinate synthase activity in the catalytic mechanism. 7-phospho-2-dehydro-3-deoxy-D-arabino-heptonate contacts are provided by residues 264-268 and His-271; that span reads RNLLN. His-271 is a binding site for Zn(2+). Catalysis depends on His-275, which acts as the Proton acceptor; for 3-dehydroquinate synthase activity. 7-phospho-2-dehydro-3-deoxy-D-arabino-heptonate contacts are provided by His-287 and Lys-356. Residue His-287 coordinates Zn(2+). The segment at 397-842 is EPSP synthase; it reads VYPGFPKSLN…WDTLAQTFKV (446 aa). The For EPSP synthase activity role is filled by Cys-824. The interval 867-1059 is shikimate kinase; the sequence is AASIFIIGMR…RRKENTFFVS (193 aa). 874-881 provides a ligand contact to ATP; that stretch reads GMRGAGKT. Positions 1060-1280 are 3-dehydroquinase; the sequence is LTFPDLTPAS…AAPGQLSARE (221 aa). His-1183 acts as the Proton acceptor; for 3-dehydroquinate dehydratase activity in catalysis. Lys-1211 acts as the Schiff-base intermediate with substrate; for 3-dehydroquinate dehydratase activity in catalysis. The interval 1293–1598 is shikimate dehydrogenase; the sequence is AKKFAVIGKP…GVSSSDDIIS (306 aa).

The protein in the N-terminal section; belongs to the sugar phosphate cyclases superfamily. Dehydroquinate synthase family. In the 2nd section; belongs to the EPSP synthase family. It in the 3rd section; belongs to the shikimate kinase family. This sequence in the 4th section; belongs to the type-I 3-dehydroquinase family. The protein in the C-terminal section; belongs to the shikimate dehydrogenase family. As to quaternary structure, homodimer. The cofactor is Zn(2+).

It localises to the cytoplasm. It carries out the reaction 7-phospho-2-dehydro-3-deoxy-D-arabino-heptonate = 3-dehydroquinate + phosphate. The enzyme catalyses 3-dehydroquinate = 3-dehydroshikimate + H2O. It catalyses the reaction shikimate + NADP(+) = 3-dehydroshikimate + NADPH + H(+). The catalysed reaction is shikimate + ATP = 3-phosphoshikimate + ADP + H(+). It carries out the reaction 3-phosphoshikimate + phosphoenolpyruvate = 5-O-(1-carboxyvinyl)-3-phosphoshikimate + phosphate. Its pathway is metabolic intermediate biosynthesis; chorismate biosynthesis; chorismate from D-erythrose 4-phosphate and phosphoenolpyruvate: step 2/7. It functions in the pathway metabolic intermediate biosynthesis; chorismate biosynthesis; chorismate from D-erythrose 4-phosphate and phosphoenolpyruvate: step 3/7. It participates in metabolic intermediate biosynthesis; chorismate biosynthesis; chorismate from D-erythrose 4-phosphate and phosphoenolpyruvate: step 4/7. The protein operates within metabolic intermediate biosynthesis; chorismate biosynthesis; chorismate from D-erythrose 4-phosphate and phosphoenolpyruvate: step 5/7. Its pathway is metabolic intermediate biosynthesis; chorismate biosynthesis; chorismate from D-erythrose 4-phosphate and phosphoenolpyruvate: step 6/7. In terms of biological role, the AROM polypeptide catalyzes 5 consecutive enzymatic reactions in prechorismate polyaromatic amino acid biosynthesis. The polypeptide is Pentafunctional AROM polypeptide (Paracoccidioides lutzii (strain ATCC MYA-826 / Pb01) (Paracoccidioides brasiliensis)).